Consider the following 58-residue polypeptide: Protein YecU (58 aa).

This chain is Protein YecU, found in Escherichia coli (strain K12).